The sequence spans 481 residues: UDP-glycosyltransferase 72B3 (481 aa).

Residues serine 277, 347-349 (APQ), 364-372 (HCGWNSSLE), and 386-389 (YAEQ) each bind UDP-alpha-D-glucose.

The protein belongs to the UDP-glycosyltransferase family.

Possesses low quercetin 3-O-glucosyltransferase activity in vitro. This Arabidopsis thaliana (Mouse-ear cress) protein is UDP-glycosyltransferase 72B3 (UGT72B3).